The primary structure comprises 272 residues: Indole-3-glycerol phosphate synthase (272 aa).

It belongs to the TrpC family.

The enzyme catalyses 1-(2-carboxyphenylamino)-1-deoxy-D-ribulose 5-phosphate + H(+) = (1S,2R)-1-C-(indol-3-yl)glycerol 3-phosphate + CO2 + H2O. It participates in amino-acid biosynthesis; L-tryptophan biosynthesis; L-tryptophan from chorismate: step 4/5. The polypeptide is Indole-3-glycerol phosphate synthase (Mycobacteroides abscessus (strain ATCC 19977 / DSM 44196 / CCUG 20993 / CIP 104536 / JCM 13569 / NCTC 13031 / TMC 1543 / L948) (Mycobacterium abscessus)).